The following is a 1551-amino-acid chain: Serine/threonine-protein kinase MRCK gamma (1551 aa).

A Protein kinase domain is found at 71–337; sequence FEILKVIGRG…LDDFRNHPFF (267 aa). Residues 77-85 and K100 contribute to the ATP site; that span reads IGRGAFGEV. D195 functions as the Proton acceptor in the catalytic mechanism. 2 positions are modified to phosphoserine; by autocatalysis: S216 and S228. A Phosphothreonine; by autocatalysis modification is found at T234. In terms of domain architecture, AGC-kinase C-terminal spans 338 to 408; sequence EGVDWERLAS…TSGSHSPESS (71 aa). Coiled-coil stretches lie at residues 406–678 and 730–802; these read ESSS…SNWE and KARR…RARG. Disordered stretches follow at residues 467–486, 655–675, 801–849, and 863–886; these read KASL…QDSD, ELAQ…ETES, RGPV…PEGR, and TANT…PRSF. The segment covering 655 to 674 has biased composition (basic and acidic residues); it reads ELAQEQESKQRLEGERRETE. A compositionally biased stretch (basic and acidic residues) spans 835–849; it reads ATRHGGEPDLRPEGR. The Phorbol-ester/DAG-type zinc finger occupies 878–927; sequence SHTLRPRSFPSPTKCLRCTSLMLGLGRQGLGCDACGYFCHTTCAPQAPPC. The region spanning 947–1066 is the PH domain; sequence GTAYEGFLSV…WLQVLGELQR (120 aa). A CNH domain is found at 1092-1366; that stretch reads LPHTLCAAIL…RPLNPEGSLF (275 aa). One can recognise a CRIB domain in the interval 1437–1450; the sequence is ISPPTNFNHLVHVG. The tract at residues 1442-1551 is disordered; sequence NFNHLVHVGP…PLSPELESSP (110 aa). Over residues 1457 to 1470 the composition is skewed to basic and acidic residues; sequence GARDKSPAPEEKGR. S1482 bears the Phosphoserine mark. Over residues 1511-1533 the composition is skewed to polar residues; it reads TSLSSESVSCPQGSLSPATSLMQ. Low complexity predominate over residues 1540 to 1551; the sequence is SLPLSPELESSP.

It belongs to the protein kinase superfamily. AGC Ser/Thr protein kinase family. DMPK subfamily. Homodimer and homotetramer via the coiled coil regions. Interacts tightly with GTP-bound but not GDP-bound CDC42. Mg(2+) serves as cofactor. Expressed in heart and skeletal muscle.

It is found in the cytoplasm. The catalysed reaction is L-seryl-[protein] + ATP = O-phospho-L-seryl-[protein] + ADP + H(+). It catalyses the reaction L-threonyl-[protein] + ATP = O-phospho-L-threonyl-[protein] + ADP + H(+). Maintained in an inactive, closed conformation by an interaction between the kinase domain and the negative autoregulatory C-terminal coiled-coil region. Agonist binding to the phorbol ester binding site disrupts this, releasing the kinase domain to allow N-terminus-mediated dimerization and kinase activation by transautophosphorylation. Its function is as follows. May act as a downstream effector of CDC42 in cytoskeletal reorganization. Contributes to the actomyosin contractility required for cell invasion, through the regulation of MYPT1 and thus MLC2 phosphorylation. This is Serine/threonine-protein kinase MRCK gamma from Homo sapiens (Human).